A 920-amino-acid chain; its full sequence is Zinc finger MIZ domain-containing protein 2 (920 aa).

2 disordered regions span residues 1–22 and 54–79; these read MNSMNPMKPALPPAPHGDGSFA and SQVLGNPMGPAGSPSGSSMMPGVAGG. Low complexity predominate over residues 60–79; it reads PMGPAGSPSGSSMMPGVAGG. At R111 the chain carries Omega-N-methylarginine. Disordered stretches follow at residues 243-265 and 286-391; these read GQRLPQHGYPGPPQAQPLPRQGV and PSTA…SPNQ. Asymmetric dimethylarginine occurs at positions 245 and 262. The segment covering 295 to 304 has biased composition (pro residues); that stretch reads PGQPPAPSPS. Over residues 334–354 the composition is skewed to polar residues; sequence EQFNGQGASFNGGSVSYSQPG. Residues 366–379 are compositionally biased toward pro residues; sequence PSSPLPGNPTPPMT. The segment covering 380–389 has biased composition (low complexity); that stretch reads PSSSVPYMSP. Glycyl lysine isopeptide (Lys-Gly) (interchain with G-Cter in SUMO2) cross-links involve residues K402 and K457. Residues 435–506 form an interaction with AR region; sequence PFRLQHNLAV…TIERGDNKTS (72 aa). Residues 585 to 671 form an SP-RING-type zinc finger; it reads GEDGVEQTAI…IYIQNSDYEE (87 aa). Residues C616, H618, C639, and C642 each coordinate Zn(2+). A Glycyl lysine isopeptide (Lys-Gly) (interchain with G-Cter in SUMO2) cross-link involves residue K692. Positions 803–920 are disordered; the sequence is SQMAPAGHLD…DDLLSLFENN (118 aa). A compositionally biased stretch (low complexity) spans 876-890; the sequence is AGEAPEPALDLLPEL. The span at 906–920 shows a compositional bias: polar residues; the sequence is PTNNNDDLLSLFENN.

As to quaternary structure, interacts with AR, SMARCA4/BRG1 and SMARCE1/BAF57. Interaction with either SMARCA4 and SMARCE1 enhances AR-mediated transcription. As to expression, expressed most abundantly in testis with lower levels in heart, brain, pancreas, prostate and ovary.

Its subcellular location is the nucleus. In terms of biological role, increases ligand-dependent transcriptional activity of AR and other nuclear hormone receptors. The polypeptide is Zinc finger MIZ domain-containing protein 2 (ZMIZ2) (Homo sapiens (Human)).